An 89-amino-acid chain; its full sequence is Phosphocarrier protein HPr (89 aa).

The HPr domain maps to 1 to 88 (MLEHELIVTN…ELFENRFNED (88 aa)). H15 (pros-phosphohistidine intermediate) is an active-site residue. S46 is modified (phosphoserine; by HPrK/P).

The protein belongs to the HPr family.

It is found in the cytoplasm. With respect to regulation, phosphorylation on Ser-46 inhibits the phosphoryl transfer from enzyme I to HPr. Its function is as follows. General (non sugar-specific) component of the phosphoenolpyruvate-dependent sugar phosphotransferase system (sugar PTS). This major carbohydrate active-transport system catalyzes the phosphorylation of incoming sugar substrates concomitantly with their translocation across the cell membrane. The phosphoryl group from phosphoenolpyruvate (PEP) is transferred to the phosphoryl carrier protein HPr by enzyme I. Phospho-HPr then transfers it to the PTS EIIA domain. In Xylella fastidiosa (strain 9a5c), this protein is Phosphocarrier protein HPr (ptsH).